The following is a 941-amino-acid chain: Bifunctional glutamine synthetase adenylyltransferase/adenylyl-removing enzyme (941 aa).

Residues 1 to 431 (MSSAPPFAAA…TFRNAFRLAG (431 aa)) form an adenylyl removase region. Residues 447-941 (NGHGMRPHAG…DGTIAQAEVK (495 aa)) are adenylyl transferase.

The protein belongs to the GlnE family. Mg(2+) is required as a cofactor.

The enzyme catalyses [glutamine synthetase]-O(4)-(5'-adenylyl)-L-tyrosine + phosphate = [glutamine synthetase]-L-tyrosine + ADP. It carries out the reaction [glutamine synthetase]-L-tyrosine + ATP = [glutamine synthetase]-O(4)-(5'-adenylyl)-L-tyrosine + diphosphate. In terms of biological role, involved in the regulation of glutamine synthetase GlnA, a key enzyme in the process to assimilate ammonia. When cellular nitrogen levels are high, the C-terminal adenylyl transferase (AT) inactivates GlnA by covalent transfer of an adenylyl group from ATP to specific tyrosine residue of GlnA, thus reducing its activity. Conversely, when nitrogen levels are low, the N-terminal adenylyl removase (AR) activates GlnA by removing the adenylyl group by phosphorolysis, increasing its activity. The regulatory region of GlnE binds the signal transduction protein PII (GlnB) which indicates the nitrogen status of the cell. This Bordetella bronchiseptica (strain ATCC BAA-588 / NCTC 13252 / RB50) (Alcaligenes bronchisepticus) protein is Bifunctional glutamine synthetase adenylyltransferase/adenylyl-removing enzyme.